A 474-amino-acid chain; its full sequence is ATP synthase subunit beta (474 aa).

158 to 165 (GGAGVGKT) contributes to the ATP binding site.

Belongs to the ATPase alpha/beta chains family. In terms of assembly, F-type ATPases have 2 components, CF(1) - the catalytic core - and CF(0) - the membrane proton channel. CF(1) has five subunits: alpha(3), beta(3), gamma(1), delta(1), epsilon(1). CF(0) has three main subunits: a(1), b(2) and c(9-12). The alpha and beta chains form an alternating ring which encloses part of the gamma chain. CF(1) is attached to CF(0) by a central stalk formed by the gamma and epsilon chains, while a peripheral stalk is formed by the delta and b chains.

The protein resides in the cell membrane. It catalyses the reaction ATP + H2O + 4 H(+)(in) = ADP + phosphate + 5 H(+)(out). Functionally, produces ATP from ADP in the presence of a proton gradient across the membrane. The catalytic sites are hosted primarily by the beta subunits. This chain is ATP synthase subunit beta, found in Tropheryma whipplei (strain Twist) (Whipple's bacillus).